The sequence spans 543 residues: Zinc finger protein egl-43 (543 aa).

The segment at 2 to 62 (SIDTDFLTSV…NLIKEADDGE (61 aa)) is positive regulatory (PR) domain. 2 consecutive C2H2-type zinc fingers follow at residues 159 to 181 (HKCGVCPKSFSSASGLKQHSHIH) and 187 to 209 (FRCHLCPKSYTQFSNLCRHRRVH). Residues 213–233 (WTCPTCQSQMPSQAALTKHRP) form a C2H2-type 3; atypical zinc finger. The disordered stretch occupies residues 299–380 (PDAECSSGHA…TSTKKRPTSH (82 aa)). Over residues 306-317 (GHASESSPTTTE) the composition is skewed to polar residues. Residues 335–348 (TTSKSDDGEDRDSI) are compositionally biased toward basic and acidic residues. C2H2-type zinc fingers lie at residues 444 to 466 (YTCKFCQKVFPRSANLTRHLRTH) and 472 to 495 (YKCQYCERSFSISSNLQRHVRNIH). The tract at residues 496 to 543 (NKPNTSLTPHNHHRQRSLHNSTSTSTTTTTVHHPLLHLPGTSVPVPKV) is disordered. Residues 513–533 (LHNSTSTSTTTTTVHHPLLHL) show a composition bias toward low complexity.

The protein resides in the nucleus. Probable transcription factor, required for migration of the hermaphrodite-specific motor neurons (HSNs) from the tail to the gonad primordium during HSN cell differentiation. Required for phasmid neuron development. Required to specify the pi-cell fate of ventral uterine precursor cell (VU) cells. Its function is as follows. Probable transcription factor, involved in lin-12 (Notch)-dependent anchor cell (AC) and ventral uterine (VU) precursor cell fate specification and in AC invasion. Prevents AC proliferation after AC cell specification by repressing lin-12 expression. May form a positive feedback loop, together with the transcription factor fos-1, that maintains mutual high levels of expression and so activates AC invasion. Functionally, dispensable for anchor cell (AC) invasion and for preventing AC proliferation. The protein is Zinc finger protein egl-43 of Caenorhabditis elegans.